The following is a 524-amino-acid chain: Cytochrome P450 monooxygenase ATR4 (524 aa).

Residues 13–36 (IITYLDSLTWVGMALPLFSLCWAI) traverse the membrane as a helical segment. Residues Asn291, Asn444, and Asn454 are each glycosylated (N-linked (GlcNAc...) asparagine).

Belongs to the cytochrome P450 family. The cofactor is heme.

Its subcellular location is the membrane. It functions in the pathway mycotoxin biosynthesis. Cytochrome P450 monooxygenase; part of the core atranone cluster (CAC) which products are predicted to catalyze most or all steps of mycotoxin atranone synthesis, starting from geranylgeranyl pyrophosphate (GGPP). The initial cyclization of GGPP to dolabellane is probably performed by the terpene cyclase ATR13. The Baeyer-Villiger oxidation near the end of the atranone synthesis, which converts atranones D and E to atranones F and G is predicted to be catalyzed by the monooxygenase ATR8. Of the CAC's other predicted gene products, the reducing PKS ATR6 might synthesize a polyketide chain. This polyketide is probably transferred onto the atranone backbone by the polyketide transferase ATR5. Other predicted CAC products include 4 oxygenases (ATR2, ATR3, ATR4, and ATR14), 3 short-chain reductases (ATR7, ATR9, and ATR10), and a methyltransferase (ATR12). These may all be involved in the various steps of atranone biosynthesis, although their specific roles must await experimental determination. This Stachybotrys chlorohalonatus (strain IBT 40285) protein is Cytochrome P450 monooxygenase ATR4.